The chain runs to 126 residues: Non-specific lipid-transfer protein 13 (126 aa).

The first 20 residues, 1 to 20 (MDTHTTKLVAISLLLLLVIS), serve as a signal peptide directing secretion. 4 disulfide bridges follow: cysteine 36–cysteine 85, cysteine 46–cysteine 61, cysteine 62–cysteine 109, and cysteine 83–cysteine 123.

It belongs to the plant LTP family.

Its function is as follows. Plant non-specific lipid-transfer proteins transfer phospholipids as well as galactolipids across membranes. May play a role in wax or cutin deposition in the cell walls of expanding epidermal cells and certain secretory tissues. The chain is Non-specific lipid-transfer protein 13 (LTP13) from Arabidopsis thaliana (Mouse-ear cress).